Here is a 442-residue protein sequence, read N- to C-terminus: Alpha-1,6-mannosyl-glycoprotein 2-beta-N-acetylglucosaminyltransferase (442 aa).

Residues methionine 1–lysine 9 lie on the Cytoplasmic side of the membrane. A helical; Signal-anchor for type II membrane protein membrane pass occupies residues valine 10–glycine 29. Topologically, residues arginine 30–glutamine 442 are lumenal. 2 N-linked (GlcNAc...) asparagine glycosylation sites follow: asparagine 64 and asparagine 81. Residues glutamine 118–arginine 122 and aspartate 149 each bind substrate. Cysteine 191 and cysteine 205 form a disulfide bridge. Glutamine 224–histidine 228 provides a ligand contact to substrate. Aspartate 256 serves as a coordination point for Mn(2+). Cysteine 278 and cysteine 281 are disulfide-bonded. Arginine 293 contributes to the substrate binding site. Cystine bridges form between cysteine 329–cysteine 352, cysteine 334–cysteine 435, and cysteine 373–cysteine 381. Histidine 369 provides a ligand contact to Mn(2+).

It belongs to the glycosyltransferase 16 (GT16) protein family. In terms of assembly, homodimer. Mn(2+) is required as a cofactor. In terms of tissue distribution, detected in liver (at protein level). Detected in liver, brain, thymus and spleen.

Its subcellular location is the golgi apparatus membrane. It catalyses the reaction an N(4)-{beta-D-GlcNAc-(1-&gt;2)-alpha-D-Man-(1-&gt;3)-[alpha-D-Man-(1-&gt;6)]-beta-D-Man-(1-&gt;4)-beta-D-GlcNAc-(1-&gt;4)-beta-D-GlcNAc}-L-asparaginyl-[protein] + UDP-N-acetyl-alpha-D-glucosamine = N(4)-{beta-D-GlcNAc-(1-&gt;2)-alpha-D-Man-(1-&gt;3)-[beta-D-GlcNAc-(1-&gt;2)-alpha-D-Man-(1-&gt;6)]-beta-D-Man-(1-&gt;4)-beta-D-GlcNAc-(1-&gt;4)-beta-D-GlcNAc}-L-asparaginyl-[protein] + UDP + H(+). It functions in the pathway protein modification; protein glycosylation. Functionally, plays an essential role in protein N-glycosylation. Catalyzes the transfer of N-acetylglucosamine (GlcNAc) onto the free terminal mannose moiety in the core structure of the nascent N-linked glycan chain, giving rise to the second branch in complex glycans. The chain is Alpha-1,6-mannosyl-glycoprotein 2-beta-N-acetylglucosaminyltransferase (Mgat2) from Rattus norvegicus (Rat).